A 126-amino-acid chain; its full sequence is Spermidine export protein MdtJ (126 aa).

4 helical membrane-spanning segments follow: residues 1 to 21 (MIYW…TLSM), 30 to 50 (ITGH…LSLA), 54 to 74 (VALG…ITLF), and 81 to 101 (EPFS…IVML).

Belongs to the drug/metabolite transporter (DMT) superfamily. Small multidrug resistance (SMR) (TC 2.A.7.1) family. MdtJ subfamily. As to quaternary structure, forms a complex with MdtI.

The protein localises to the cell inner membrane. Functionally, catalyzes the excretion of spermidine. The chain is Spermidine export protein MdtJ from Sodalis glossinidius (strain morsitans).